The following is a 148-amino-acid chain: Small ribosomal subunit protein uS15 (148 aa).

The tract at residues 1–23 (MRKSKEKGRSGSTRPPQLKKPEW) is disordered.

This sequence belongs to the universal ribosomal protein uS15 family. In terms of assembly, part of the 30S ribosomal subunit.

The sequence is that of Small ribosomal subunit protein uS15 from Thermofilum pendens (strain DSM 2475 / Hrk 5).